The primary structure comprises 688 residues: Subtilisin-like protease 1 (688 aa).

The first 25 residues, 1-25 (MMLNKKVVALCTLTLHLFCIFLCLG), serve as a signal peptide directing secretion. A propeptide spans 26-217 (KEVRSEENGK…IESDKLVSAD (192 aa)) (inhibition peptide). The interval 99–129 (EKNKNDNHNNNNNNISSSSSSSSNTFGEEKE) is disordered. The span at 106–122 (HNNNNNNISSSSSSSSN) shows a compositional bias: low complexity. A glycan (N-linked (GlcNAc...) asparagine) is linked at Asn-112. Ca(2+) contacts are provided by Asn-145, Thr-148, and Pro-150. N-linked (GlcNAc...) asparagine glycosylation is present at Asn-171. Residue Gly-205 coordinates Ca(2+). The N-linked (GlcNAc...) asparagine glycan is linked to Asn-261. 2 disordered regions span residues 264–284 (HAAT…DTFS) and 303–332 (NNNN…RPGK). Positions 303–328 (NNNNYYYSHSSNGHNSSSRNSSSSRS) are enriched in low complexity. Asn-317 and Asn-322 each carry an N-linked (GlcNAc...) asparagine glycan. Asp-337 contacts Ca(2+). Positions 343-661 (QWGLDLSRLD…AGYADINKAV (319 aa)) constitute a Peptidase S8 domain. 2 disulfide bridges follow: Cys-369–Cys-479 and Cys-458–Cys-475. The active-site Charge relay system is Asp-372. Positions 381, 392, 396, 399, 400, 401, 402, 404, 406, 408, and 409 each coordinate Ca(2+). Residue Asn-417 is glycosylated (N-linked (GlcNAc...) asparagine). His-428 functions as the Charge relay system in the catalytic mechanism. 4 residues coordinate Ca(2+): Ile-439, Asn-442, Ile-444, and Val-446. Asn-488, Asn-501, and Asn-520 each carry an N-linked (GlcNAc...) asparagine glycan. Cys-521 and Cys-534 form a disulfide bridge. The N-linked (GlcNAc...) asparagine glycan is linked to Asn-603. The Charge relay system role is filled by Ser-606. Asn-675 is a glycosylation site (N-linked (GlcNAc...) asparagine).

Belongs to the peptidase S8 family. In terms of assembly, heterodimer between p54 form and prodomain p31; the interaction inhibits p54 catalytic activity. Heterodimer p31-p54 is monomeric at basic pH and dimeric at acidic pH; dimerization is driven by the N-terminal prodomain (p31). The cofactor is Ca(2+). The prodomain (p31) is cleaved, probably by autocatalysis, during the transport to or in the Golgi apparatus, and remains non-covalently associated with the p54 form as an inhibitor. p54 is further cleaved into the p47 form. The p54-to-p47 conversion can be also autocatalytic. This cleavage is likely occurring in the exoneme prior to egress and is mediated by PMX/plasmepsin X. Heterodimer p31-p54 is activated by cleavage of prodomain (p31) by the aspartic protease PMX; cleavage by PMX abolishes inhibitory capacity of p31. Primary autocatalytic processing of SUB1 is essential for parasite growth; the p54-to-p47 conversion is dispensable for SUB1 functions in the parasites. Post-translationally, the disulfide bond between Cys-521 and Cys-534 acts as a redox-sensitive disulfide switch. The oxidized form is required for catalytic activity. In terms of processing, the relevance of the N-glycosylation is not clear. In an insect expression system, SUB1 glycosylation appears to affect its processing into the active mature form suggesting that SUB1 may not be N-glycosylated in parasites.

The protein resides in the secreted. It is found in the parasitophorous vacuole lumen. The catalysed reaction is Hydrolysis of proteins with broad specificity for peptide bonds, and a preference for a large uncharged residue in P1. Hydrolyzes peptide amides.. Its activity is regulated as follows. p54 and probably p47 forms are inhibited by the non-covalent interaction with the cleaved propeptide. Inhibited by subtilisin propeptide-like protein SUB1-ProM. Inhibited by small molecule MRT12113. Its function is as follows. Serine protease which plays an essential role in merozoite invasion of and egress from host erythrocytes by processing and activating various merozoite surface and parasitophorous vacuole proteins. Mediates the proteolytic maturation of serine proteases SERA4, SERA5 and SERA6 just prior to merozoite egress. Prior to merozoite egress, cleaves merozoite surface proteins MSP1, MSP6 and MSP7, which form the MSP1/6/7 complex, and thereby may prime the parasite cell surface for invasion of fresh erythrocytes. Prior to merozoite egress, cleaves MSRP2 converting it to MSRP2 p25 form, and RAP1 converting it to RAP1 p67 form. This is Subtilisin-like protease 1 from Plasmodium falciparum (isolate 3D7).